Reading from the N-terminus, the 284-residue chain is Spermidine synthase (284 aa).

The PABS domain maps to 6 to 241 (NGWFSEISEF…GSIGFILCSL (236 aa)). Residue Gln37 participates in S-adenosyl 3-(methylsulfanyl)propylamine binding. Tyr67 contributes to the putrescine binding site. Residues Gln68, Asp92, Glu112, 143–144 (DG), and Asp161 contribute to the S-adenosyl 3-(methylsulfanyl)propylamine site. Asp161 acts as the Proton acceptor in catalysis. Residues 161–164 (DSSD) and Tyr229 contribute to the putrescine site.

Belongs to the spermidine/spermine synthase family.

It carries out the reaction S-adenosyl 3-(methylsulfanyl)propylamine + putrescine = S-methyl-5'-thioadenosine + spermidine + H(+). The protein operates within amine and polyamine biosynthesis; spermidine biosynthesis; spermidine from putrescine: step 1/1. Its function is as follows. Catalyzes the production of spermidine from putrescine and decarboxylated S-adenosylmethionine (dcSAM). Has a strong preference for putrescine as substrate. The chain is Spermidine synthase (spsA) from Dictyostelium discoideum (Social amoeba).